The sequence spans 470 residues: Phosphoribosylamine--glycine ligase (470 aa).

An ATP-grasp domain is found at 115 to 354 (KDFLKRIGVP…MAEISMAVVE (240 aa)). 142 to 203 (REKFNNGIVV…EERLRGIEVA (62 aa)) is an ATP binding site. Residues glutamate 324 and asparagine 326 each coordinate Mg(2+).

This sequence belongs to the GARS family. It depends on Mg(2+) as a cofactor. Mn(2+) serves as cofactor.

It catalyses the reaction 5-phospho-beta-D-ribosylamine + glycine + ATP = N(1)-(5-phospho-beta-D-ribosyl)glycinamide + ADP + phosphate + H(+). It participates in purine metabolism; IMP biosynthesis via de novo pathway; N(1)-(5-phospho-D-ribosyl)glycinamide from 5-phospho-alpha-D-ribose 1-diphosphate: step 2/2. This chain is Phosphoribosylamine--glycine ligase (purD), found in Archaeoglobus fulgidus (strain ATCC 49558 / DSM 4304 / JCM 9628 / NBRC 100126 / VC-16).